Reading from the N-terminus, the 103-residue chain is Putative membrane protein insertion efficiency factor (103 aa).

The protein belongs to the UPF0161 family.

It is found in the cell inner membrane. Its function is as follows. Could be involved in insertion of integral membrane proteins into the membrane. This Chlamydia abortus (strain DSM 27085 / S26/3) (Chlamydophila abortus) protein is Putative membrane protein insertion efficiency factor.